The sequence spans 293 residues: Signal recognition particle receptor FtsY (293 aa).

Residues 93–100 (GVNGAGKT), 175–179 (DTAGR), and 239–242 (TKLD) each bind GTP.

It belongs to the GTP-binding SRP family. FtsY subfamily. As to quaternary structure, part of the signal recognition particle protein translocation system, which is composed of SRP and FtsY. SRP is a ribonucleoprotein composed of Ffh and a 4.5S RNA molecule.

It is found in the cell inner membrane. The protein localises to the cytoplasm. It catalyses the reaction GTP + H2O = GDP + phosphate + H(+). Involved in targeting and insertion of nascent membrane proteins into the cytoplasmic membrane. Acts as a receptor for the complex formed by the signal recognition particle (SRP) and the ribosome-nascent chain (RNC). Interaction with SRP-RNC leads to the transfer of the RNC complex to the Sec translocase for insertion into the membrane, the hydrolysis of GTP by both Ffh and FtsY, and the dissociation of the SRP-FtsY complex into the individual components. This Helicobacter pylori (strain J99 / ATCC 700824) (Campylobacter pylori J99) protein is Signal recognition particle receptor FtsY.